We begin with the raw amino-acid sequence, 802 residues long: Mitogen-activated protein kinase kinase kinase 20 (802 aa).

Serine 2 is modified (N-acetylserine). Residues serine 2, serine 3, and serine 7 each carry the phosphoserine modification. Positions 16–277 constitute a Protein kinase domain; it reads LQFFENCGGG…NLPDQCNSFL (262 aa). ATP is bound by residues 22 to 30 and lysine 45; that span reads CGGGSFGSV. Residue aspartate 133 is the Proton acceptor of the active site. At threonine 161 the chain carries Phosphothreonine; by autocatalysis. Phosphoserine; by autocatalysis is present on serine 165. A phosphoserine mark is found at serine 275 and serine 302. The tract at residues 287 to 308 is leucine-zipper; it reads IEATLERLKKLERDLSFKEQEL. Residues 339–410 form the SAM domain; that stretch reads WTEDDVYFWV…KSAIEKLTHD (72 aa). Residues lysine 434, glutamine 453, and serine 567 each carry the phosphoserine modification. Phosphothreonine is present on threonine 586. 3 positions are modified to phosphoserine: serine 587, serine 593, and serine 599. Polar residues predominate over residues 624 to 642; it reads YQQITPSINPSRSSSPTQY. A disordered region spans residues 624 to 802; the sequence is YQQITPSINP…RGNYRGRRNF (179 aa). Threonine 628 is modified (phosphothreonine). Phosphoserine occurs at positions 634, 638, 649, 650, and 661. A compositionally biased stretch (low complexity) spans 643 to 666; it reads GLSRNFSSLNLSSRDSGFSSLNDS. Residues 667–678 show a composition bias toward basic and acidic residues; that stretch reads SSERGRYSDRSR. The segment at 670-713 is sensing domain (S); the sequence is RGRYSDRSRNKYYRGSVSLNSSPKGRYGGKSQHSTPSRERYSGK. 4 positions are modified to phosphoserine: serine 685, serine 720, serine 727, and serine 733. Over residues 728–741 the composition is skewed to basic and acidic residues; sequence PDFKRSPNDHDRRV. Position 744 is a phosphothreonine (threonine 744). A C-terminal domain (CTD) region spans residues 776–802; sequence RKKTHRQLSAKTSKERTRGNYRGRRNF.

Belongs to the protein kinase superfamily. STE Ser/Thr protein kinase family. MAP kinase kinase kinase subfamily. In terms of assembly, homodimer. Interacts with ZNF33A. Component of a signaling complex containing at least AKAP13, PKN1, MAPK14, MAP3K20 and MAP2K3. Within this complex, AKAP13 interacts directly with PKN1, which in turn recruits MAPK14, MAP2K3 and MAP3K20. Interacts with EIF2AK4/GCN2; promoting EIF2AK4/GCN2 kinase activity. As to quaternary structure, interacts with isoform ZAKbeta. Interacts with isoform ZAKalpha. Mg(2+) is required as a cofactor. Activated by phosphorylation by PKN1, followed by autophosphorylation on Thr-161 and Ser-165. Autophosphorylation in response to ribotoxic stress promotes dissociation from colliding ribosomes and activation.

It is found in the cytoplasm. It localises to the nucleus. The enzyme catalyses L-seryl-[protein] + ATP = O-phospho-L-seryl-[protein] + ADP + H(+). It catalyses the reaction L-threonyl-[protein] + ATP = O-phospho-L-threonyl-[protein] + ADP + H(+). Its activity is regulated as follows. Activated in response to stress, such as ribosomal stress, osmotic shock and ionizing radiation. Activated by phosphorylation by PKN1, followed by autophosphorylation on Thr-161 and Ser-165. Stress-activated component of a protein kinase signal transduction cascade that promotes programmed cell death in response to various stress, such as ribosomal stress, osmotic shock and ionizing radiation. Acts by catalyzing phosphorylation of MAP kinase kinases, leading to activation of the JNK (MAPK8/JNK1, MAPK9/JNK2 and/or MAPK10/JNK3) and MAP kinase p38 (MAPK11, MAPK12, MAPK13 and/or MAPK14) pathways. Activates JNK through phosphorylation of MAP2K4/MKK4 and MAP2K7/MKK7, and MAP kinase p38 gamma (MAPK12) via phosphorylation of MAP2K3/MKK3 and MAP2K6/MKK6. Involved in stress associated with adrenergic stimulation: contributes to cardiac decompensation during periods of acute cardiac stress. May be involved in regulation of S and G2 cell cycle checkpoint by mediating phosphorylation of CHEK2. Functionally, key component of the stress-activated protein kinase signaling cascade in response to ribotoxic stress or UV-B irradiation. Acts as the proximal sensor of ribosome collisions during the ribotoxic stress response (RSR). Directly binds to the ribosome by inserting its flexible C-terminus into the ribosomal intersubunit space, thereby acting as a sentinel for colliding ribosomes. Upon ribosome collisions, activates either the stress-activated protein kinase signal transduction cascade or the integrated stress response (ISR), leading to programmed cell death or cell survival, respectively. Dangerous levels of ribosome collisions trigger the autophosphorylation and activation of MAP3K20, which dissociates from colliding ribosomes and phosphorylates MAP kinase kinases, leading to activation of the JNK and MAP kinase p38 pathways that promote programmed cell death. Less dangerous levels of ribosome collisions trigger the integrated stress response (ISR): MAP3K20 activates EIF2AK4/GCN2 independently of its protein-kinase activity, promoting EIF2AK4/GCN2-mediated phosphorylation of EIF2S1/eIF-2-alpha. Also acts as a histone kinase by phosphorylating histone H3 at 'Ser-28' (H3S28ph). Its function is as follows. Isoform that lacks the C-terminal region that mediates ribosome-binding: does not act as a sensor of ribosome collisions in response to ribotoxic stress. May act as an antagonist of isoform ZAKalpha: interacts with isoform ZAKalpha, leading to decrease the expression of isoform ZAKalpha. The polypeptide is Mitogen-activated protein kinase kinase kinase 20 (Mus musculus (Mouse)).